The following is a 187-amino-acid chain: Large ribosomal subunit protein uL22 (187 aa).

Residues 155 to 187 are disordered; sequence DAVSRAAPTDDAPAKKKLSKKKLARQKEKMMRE. Residues 169 to 178 show a composition bias toward basic residues; the sequence is KKKLSKKKLA.

Belongs to the universal ribosomal protein uL22 family.

In Lonomia obliqua (Moth), this protein is Large ribosomal subunit protein uL22 (RpL17).